The sequence spans 443 residues: Proline--tRNA ligase (443 aa).

This sequence belongs to the class-II aminoacyl-tRNA synthetase family. ProS type 2 subfamily. In terms of assembly, homodimer.

The protein localises to the cytoplasm. The catalysed reaction is tRNA(Pro) + L-proline + ATP = L-prolyl-tRNA(Pro) + AMP + diphosphate. Functionally, catalyzes the attachment of proline to tRNA(Pro) in a two-step reaction: proline is first activated by ATP to form Pro-AMP and then transferred to the acceptor end of tRNA(Pro). In Zymomonas mobilis subsp. mobilis (strain ATCC 10988 / DSM 424 / LMG 404 / NCIMB 8938 / NRRL B-806 / ZM1), this protein is Proline--tRNA ligase.